We begin with the raw amino-acid sequence, 163 residues long: Nucleotide-binding protein DvMF_3058 (163 aa).

This sequence belongs to the YajQ family.

Its function is as follows. Nucleotide-binding protein. The polypeptide is Nucleotide-binding protein DvMF_3058 (Nitratidesulfovibrio vulgaris (strain DSM 19637 / Miyazaki F) (Desulfovibrio vulgaris)).